A 358-amino-acid polypeptide reads, in one-letter code: tRNA-specific 2-thiouridylase MnmA (358 aa).

ATP-binding positions include 6-13 and L32; that span reads AMSGGVDS. C101 functions as the Nucleophile in the catalytic mechanism. A disulfide bond links C101 and C193. G125 is an ATP binding site. The segment at 143 to 145 is interaction with tRNA; the sequence is KDQ. C193 (cysteine persulfide intermediate) is an active-site residue.

This sequence belongs to the MnmA/TRMU family.

The protein localises to the cytoplasm. The catalysed reaction is S-sulfanyl-L-cysteinyl-[protein] + uridine(34) in tRNA + AH2 + ATP = 2-thiouridine(34) in tRNA + L-cysteinyl-[protein] + A + AMP + diphosphate + H(+). Its function is as follows. Catalyzes the 2-thiolation of uridine at the wobble position (U34) of tRNA, leading to the formation of s(2)U34. This Mycolicibacterium paratuberculosis (strain ATCC BAA-968 / K-10) (Mycobacterium paratuberculosis) protein is tRNA-specific 2-thiouridylase MnmA.